Consider the following 141-residue polypeptide: Small ribosomal subunit protein bS6 (141 aa).

Residues threonine 97–glutamate 141 are disordered. Positions leucine 103 to serine 124 are enriched in basic and acidic residues. Acidic residues predominate over residues alanine 125–glutamate 141.

It belongs to the bacterial ribosomal protein bS6 family.

In terms of biological role, binds together with bS18 to 16S ribosomal RNA. This is Small ribosomal subunit protein bS6 from Pseudomonas fluorescens (strain ATCC BAA-477 / NRRL B-23932 / Pf-5).